The following is a 179-amino-acid chain: Large ribosomal subunit protein uL6 (179 aa).

The protein belongs to the universal ribosomal protein uL6 family. Part of the 50S ribosomal subunit.

In terms of biological role, this protein binds to the 23S rRNA, and is important in its secondary structure. It is located near the subunit interface in the base of the L7/L12 stalk, and near the tRNA binding site of the peptidyltransferase center. This is Large ribosomal subunit protein uL6 from Alkaliphilus metalliredigens (strain QYMF).